The following is a 585-amino-acid chain: Pyruvate kinase (585 aa).

Position 32 (R32) interacts with substrate. Residues N34, S36, D66, and T67 each coordinate K(+). Position 34–37 (34–37) interacts with ATP; the sequence is NFSH. Residues R73 and K156 each contribute to the ATP site. E221 provides a ligand contact to Mg(2+). Substrate contacts are provided by G244, D245, and T277. Mg(2+) is bound at residue D245.

It belongs to the pyruvate kinase family. The protein in the C-terminal section; belongs to the PEP-utilizing enzyme family. The cofactor is Mg(2+). It depends on K(+) as a cofactor.

It carries out the reaction pyruvate + ATP = phosphoenolpyruvate + ADP + H(+). It functions in the pathway carbohydrate degradation; glycolysis; pyruvate from D-glyceraldehyde 3-phosphate: step 5/5. The protein is Pyruvate kinase (pyk) of Staphylococcus aureus (strain USA300).